Reading from the N-terminus, the 212-residue chain is Glycerol-3-phosphate acyltransferase (212 aa).

A run of 4 helical transmembrane segments spans residues 3–23 (ILLAALVAYLIGSVSFAVVVS), 78–98 (DVAVAWVAIAVFLGHLYPVFF), 115–135 (AVHPVLGLATALTWLIVAFFF), and 155–177 (FLFGTGHNPVAWAVLAMSVLLVW).

Belongs to the PlsY family. As to quaternary structure, probably interacts with PlsX.

The protein localises to the cell inner membrane. It catalyses the reaction an acyl phosphate + sn-glycerol 3-phosphate = a 1-acyl-sn-glycero-3-phosphate + phosphate. It participates in lipid metabolism; phospholipid metabolism. Functionally, catalyzes the transfer of an acyl group from acyl-phosphate (acyl-PO(4)) to glycerol-3-phosphate (G3P) to form lysophosphatidic acid (LPA). This enzyme utilizes acyl-phosphate as fatty acyl donor, but not acyl-CoA or acyl-ACP. The polypeptide is Glycerol-3-phosphate acyltransferase (Burkholderia lata (strain ATCC 17760 / DSM 23089 / LMG 22485 / NCIMB 9086 / R18194 / 383)).